We begin with the raw amino-acid sequence, 523 residues long: Glutamate--cysteine ligase (523 aa).

Belongs to the glutamate--cysteine ligase type 1 family. Type 1 subfamily.

It catalyses the reaction L-cysteine + L-glutamate + ATP = gamma-L-glutamyl-L-cysteine + ADP + phosphate + H(+). It participates in sulfur metabolism; glutathione biosynthesis; glutathione from L-cysteine and L-glutamate: step 1/2. This is Glutamate--cysteine ligase from Baumannia cicadellinicola subsp. Homalodisca coagulata.